Here is a 151-residue protein sequence, read N- to C-terminus: UPF0251 protein Ctha_0452 (151 aa).

Belongs to the UPF0251 family.

The sequence is that of UPF0251 protein Ctha_0452 from Chloroherpeton thalassium (strain ATCC 35110 / GB-78).